Here is a 500-residue protein sequence, read N- to C-terminus: Autophagy-related protein 18 (500 aa).

The WD 1 repeat unit spans residues 3–41; it reads DSSPTINFINFNQTGTCISLGTSKGFKIFNCEPFGKFYS. Positions 174–197 are disordered; that stretch reads VGGNTETSFKRDQQDAGHSDISDL. Over residues 181-194 the composition is skewed to basic and acidic residues; it reads SFKRDQQDAGHSDI. WD repeat units follow at residues 243-283 and 288-327; these read AHKG…KIYQ and TYATRIYSISFSEDSQYLAVTGSSKTVHIFKLGHSMSNNK. Positions 284–288 match the L/FRRG motif motif; it reads FRRGT. Positions 328–358 are disordered; that stretch reads LDSDDSNMEEAAADDSSLDTTSIDALSDEEN. Acidic residues predominate over residues 331–344; that stretch reads DDSNMEEAAADDSS. Ser-354 carries the post-translational modification Phosphoserine.

This sequence belongs to the WD repeat PROPPIN family. As to quaternary structure, component of the PI(3,5)P2 regulatory complex, composed of ATG18, FIG4, FAB1, VAC14 and VAC7. VAC14 nucleates the assembly of the complex and serves as a scaffold. Interacts with ATG2, ATG9 and VAC17. The ATG2-ATG18 complex is essential for autophagosome formation.

It localises to the preautophagosomal structure membrane. It is found in the vacuole membrane. The protein resides in the endosome membrane. Its function is as follows. The PI(3,5)P2 regulatory complex regulates both the synthesis and turnover of phosphatidylinositol 3,5-bisphosphate (PtdIns(3,5)P2). May negatively regulate FAB1 activity by sequestering or masking VAC7 from FAB1. Necessary for proper vacuole morphology. Plays an important role in osmotically-induced vacuole fragmentation. Required for cytoplasm to vacuole transport (Cvt) vesicle formation, pexophagy and starvation-induced autophagy. Involved in correct ATG9 trafficking to the pre-autophagosomal structure. Might also be involved in premeiotic DNA replication. With ATG2, protects ATG8 from ARG4-mediated cleavage. This is Autophagy-related protein 18 (ATG18) from Saccharomyces cerevisiae (strain YJM789) (Baker's yeast).